Reading from the N-terminus, the 114-residue chain is Hemerythrin subunit 1 (114 aa).

Residues His-26, His-55, Glu-59, His-74, His-78, His-102, and Asp-107 each contribute to the Fe cation site.

This sequence belongs to the hemerythrin family.

Hemerythrin is a respiratory protein in blood cells of certain marine worms. The oxygen-binding site in each chain contains two iron atoms. This Golfingia vulgaris (Marine worm) protein is Hemerythrin subunit 1.